Consider the following 484-residue polypeptide: Probable sphingolipid transporter spinster homolog 2 (484 aa).

Residues 1 to 23 are disordered; it reads MDVDGEGDRGQNPRIMERDSDSI. Residues 38–58 form a helical membrane-spanning segment; it reads LLFVFCVVNLINYIDRGAIAS. Residues asparagine 62 and asparagine 85 are each glycosylated (N-linked (GlcNAc...) asparagine). Transmembrane regions (helical) follow at residues 93-113, 122-142, 147-167, 181-201, 209-229, 273-293, 311-331, 345-362, 377-397, 405-425, and 436-456; these read VLSSAFMVGLLVASPIFASLA, IGVGLSIWTLAVIGCGLSFDF, ICRMFVGVGEASFVSLAAPFI, AVFYMCIPTGYAFGYVYGGVV, AAFWGEAILMLPFAVLGFVIK, VYVTNILGYIAYNFVLGAYSY, IFGGVTVVCGIVGTLSGGVIL, LSVSTFIGAIFCFAAFCF, LLVFATQGPVNFIVLHCVKPS, MSTVSIHIFGDVPSSPLVGVL, and SLVLTFVLFPAAAIWSIGIFL. Phosphoserine is present on serine 466.

Belongs to the major facilitator superfamily. Spinster (TC 2.A.1.49) family.

It is found in the late endosome membrane. The protein resides in the lysosome membrane. Probable sphingolipid transporter that plays a central role in endosomes and/or lysosomes storage. The polypeptide is Probable sphingolipid transporter spinster homolog 2 (Arabidopsis thaliana (Mouse-ear cress)).